The chain runs to 446 residues: Na(+)-translocating NADH-quinone reductase subunit A (446 aa).

This sequence belongs to the NqrA family. As to quaternary structure, composed of six subunits; NqrA, NqrB, NqrC, NqrD, NqrE and NqrF.

It catalyses the reaction a ubiquinone + n Na(+)(in) + NADH + H(+) = a ubiquinol + n Na(+)(out) + NAD(+). Functionally, NQR complex catalyzes the reduction of ubiquinone-1 to ubiquinol by two successive reactions, coupled with the transport of Na(+) ions from the cytoplasm to the periplasm. NqrA to NqrE are probably involved in the second step, the conversion of ubisemiquinone to ubiquinol. The polypeptide is Na(+)-translocating NADH-quinone reductase subunit A (Vibrio campbellii (strain ATCC BAA-1116)).